The sequence spans 274 residues: 3-methyl-2-oxobutanoate hydroxymethyltransferase (274 aa).

Mg(2+) contacts are provided by aspartate 46 and aspartate 85. 3-methyl-2-oxobutanoate is bound by residues 46–47, aspartate 85, and lysine 114; that span reads DS. Position 116 (glutamate 116) interacts with Mg(2+). Catalysis depends on glutamate 183, which acts as the Proton acceptor.

The protein belongs to the PanB family. As to quaternary structure, homodecamer; pentamer of dimers. Mg(2+) serves as cofactor.

It localises to the cytoplasm. The enzyme catalyses 3-methyl-2-oxobutanoate + (6R)-5,10-methylene-5,6,7,8-tetrahydrofolate + H2O = 2-dehydropantoate + (6S)-5,6,7,8-tetrahydrofolate. Its pathway is cofactor biosynthesis; coenzyme A biosynthesis. In terms of biological role, catalyzes the reversible reaction in which hydroxymethyl group from 5,10-methylenetetrahydrofolate is transferred onto alpha-ketoisovalerate to form ketopantoate. This chain is 3-methyl-2-oxobutanoate hydroxymethyltransferase, found in Aeropyrum pernix (strain ATCC 700893 / DSM 11879 / JCM 9820 / NBRC 100138 / K1).